The sequence spans 211 residues: ATP phosphoribosyltransferase (211 aa).

The protein belongs to the ATP phosphoribosyltransferase family. Short subfamily. In terms of assembly, heteromultimer composed of HisG and HisZ subunits.

The protein localises to the cytoplasm. It carries out the reaction 1-(5-phospho-beta-D-ribosyl)-ATP + diphosphate = 5-phospho-alpha-D-ribose 1-diphosphate + ATP. It functions in the pathway amino-acid biosynthesis; L-histidine biosynthesis; L-histidine from 5-phospho-alpha-D-ribose 1-diphosphate: step 1/9. Its function is as follows. Catalyzes the condensation of ATP and 5-phosphoribose 1-diphosphate to form N'-(5'-phosphoribosyl)-ATP (PR-ATP). Has a crucial role in the pathway because the rate of histidine biosynthesis seems to be controlled primarily by regulation of HisG enzymatic activity. This Pseudomonas fluorescens (strain Pf0-1) protein is ATP phosphoribosyltransferase.